The chain runs to 57 residues: uncharacterized protein (57 aa).

Positions 1 to 57 (MANHRGGSGNFAEDRERASEAGKKGGQHSGGNFKNDPQRASEAGKKGGKSSHGKSDN) are disordered. Basic and acidic residues-rich tracts occupy residues 12–23 (AEDRERASEAGK) and 36–45 (DPQRASEAGK). Basic residues predominate over residues 46-57 (KGGKSSHGKSDN).

This sequence belongs to the con-10 family.

This is an uncharacterized protein from Escherichia coli (strain K12).